The sequence spans 166 residues: Probable DHNTP pyrophosphohydrolase (166 aa).

Positions 42 to 166 (DLQLSASALV…FKKYYRYKNI (125 aa)) constitute a Nudix hydrolase domain. Residues 73–94 (GHVELKESPLDTAIREFHEETG) carry the Nudix box motif. Positions 88 and 92 each coordinate Mg(2+).

The protein belongs to the Nudix hydrolase family. As to quaternary structure, monomer. Mg(2+) serves as cofactor.

It participates in cofactor biosynthesis; tetrahydrofolate biosynthesis; 2-amino-4-hydroxy-6-hydroxymethyl-7,8-dihydropteridine diphosphate from 7,8-dihydroneopterin triphosphate: step 1/4. In terms of biological role, probably mediates the removal of pyrophosphate from dihydroneopterin triphosphate (DHNTP), a possible step in the pterin branch of the folate synthesis pathway. The chain is Probable DHNTP pyrophosphohydrolase (folQ) from Lactococcus lactis subsp. cremoris (strain MG1363).